The chain runs to 1648 residues: Vitellogenin-6 (1648 aa).

A signal peptide spans 1–15; that stretch reads MRFAVLLALFGLALA. The region spanning 26 to 691 is the Vitellogenin domain; sequence YRSGREYRYQ…SNDSVLPKEI (666 aa). 2 cysteine pairs are disulfide-bonded: Cys178-Cys203 and Cys219-Cys222. 3 N-linked (GlcNAc...) asparagine glycosylation sites follow: Asn237, Asn371, and Asn683. A disordered region spans residues 1070-1092; the sequence is EKNVEYEQEDKEPKSSQLQSQIR. Asn1295 carries N-linked (GlcNAc...) asparagine glycosylation. The VWFD domain maps to 1346 to 1514; the sequence is PECIVKSKEI…SYLSKDDECE (169 aa). 2 disulfide bridges follow: Cys1348–Cys1477 and Cys1370–Cys1513. N-linked (GlcNAc...) asparagine glycans are attached at residues Asn1584 and Asn1617.

Post-translationally, the precursor protein is probably further processed into vitellin polypeptides VT2 and VT3. Both VT2 and VT3 polypeptides seem to be N-glycosylated.

It is found in the secreted. Functionally, precursor of the egg-yolk proteins that are sources of nutrients during embryonic development. This chain is Vitellogenin-6 (vit-6), found in Oscheius tipulae.